Here is a 162-residue protein sequence, read N- to C-terminus: Caveolin-2 (162 aa).

Topologically, residues 1 to 86 (MGLETEKADV…FEVSKYVIYK (86 aa)) are cytoplasmic. The residue at position 19 (tyrosine 19) is a Phosphotyrosine; by SRC. Phosphoserine is present on residues serine 20 and serine 23. Phosphotyrosine; by SRC is present on tyrosine 27. The segment at residues 87 to 107 (FLTLFLAIPLAFAAGILFATL) is an intramembrane region (helical). Over 108–162 (SCLHIWIVMPFVKTCLMVLPSVQTIWKSVTDVVIAPLCASVGRSFSSVSMQLSRD) the chain is Cytoplasmic.

It belongs to the caveolin family. Monomer or homodimer. Interacts with CAV1; the interaction forms a stable heterooligomeric complex that is required for targeting to lipid rafts and for caveolae formation. Tyrosine phosphorylated forms do not form heterooligomers with the Tyr-19-phosphorylated form existing as a monomer or dimer, and the Tyr-27-form as a monomer only. Interacts (tyrosine phosphorylated form) with the SH2 domain-containing proteins, RASA1, NCK1 and SRC. Interacts (tyrosine phosphorylated form) with INSR, the interaction (Tyr-27-phosphorylated form) is increased on insulin stimulation. Interacts (Tyr-19 phosphorylated form) with MAPK1 (phosphorylated form); the interaction, promoted by insulin, leads to nuclear location and MAPK1 activation. Interacts with STAT3; the interaction is increased on insulin-induced tyrosine phosphorylation leading to STAT activation. In terms of processing, phosphorylated on serine and tyrosine residues. CAV1 promotes phosphorylation on Ser-23 which then targets the complex to the plasma membrane, lipid rafts and caveolae. Phosphorylation on both Tyr-19 and Tyr-27 is required for insulin-induced 'Ser-727' phosphorylation of STAT3 and its activation. Phosphorylation on Tyr-19 is required for insulin-induced phosphorylation of MAPK1 and DNA binding of STAT3. Tyrosine phosphorylation is induced by both EGF and insulin.

Its subcellular location is the nucleus. The protein localises to the cytoplasm. The protein resides in the golgi apparatus membrane. It localises to the cell membrane. It is found in the membrane. Its subcellular location is the caveola. In terms of biological role, may act as a scaffolding protein within caveolar membranes. Interacts directly with G-protein alpha subunits and can functionally regulate their activity. Acts as an accessory protein in conjunction with CAV1 in targeting to lipid rafts and driving caveolae formation. Positive regulator of cellular mitogenesis of the MAPK signaling pathway. Required for the insulin-stimulated nuclear translocation and activation of MAPK1 and STAT3, and the subsequent regulation of cell cycle progression. This Rhinolophus ferrumequinum (Greater horseshoe bat) protein is Caveolin-2 (CAV2).